Here is a 229-residue protein sequence, read N- to C-terminus: Molybdenum transport system permease protein ModB (229 aa).

Topologically, residues 1–16 (MILTDPEWQAVLLSLK) are periplasmic. Residues 11-219 (VLLSLKVSSL…MISLLISEWL (209 aa)) enclose the ABC transmembrane type-1 domain. The chain crosses the membrane as a helical span at residues 17-37 (VSSLAVLFSLPFGIFFAWLLV). Residues 38-49 (RCTFPGKALLDS) lie on the Cytoplasmic side of the membrane. Residues 50–70 (VLHLPLVLPPVVVGYLLLVSM) traverse the membrane as a helical segment. Over 71-83 (GRRGFIGERLYDW) the chain is Periplasmic. A helical transmembrane segment spans residues 84–104 (FGITFAFSWRGAVLAAAVMSF). Over 105–136 (PLMVRAIRLALEGVDVKLEQAARTLGAGRWRV) the chain is Cytoplasmic. A helical transmembrane segment spans residues 137–157 (FFTITLPLTLPGIIVGTVLAF). The Periplasmic portion of the chain corresponds to 158–201 (ARSLGEFGATITFVSNIPGETRTIPSAMYTLIQTPGGESGAARL). Residues 202-222 (CIISIALAMISLLISEWLARI) form a helical membrane-spanning segment. Residues 223–229 (SRERAGR) lie on the Cytoplasmic side of the membrane.

This sequence belongs to the binding-protein-dependent transport system permease family. CysTW subfamily.

The protein resides in the cell inner membrane. Functionally, part of the binding-protein-dependent transport system for molybdenum; probably responsible for the translocation of the substrate across the membrane. The sequence is that of Molybdenum transport system permease protein ModB (modB) from Escherichia coli O157:H7.